The sequence spans 463 residues: Type IV secretion system protein PtlD homolog (463 aa).

Residues 1 to 24 (MAGLSRILLSCTLACLLAGQAAQA) form the signal peptide. 5 helical membrane passes run 118–138 (LQPL…YALL), 232–252 (WLLC…LAAS), 253–273 (LLIV…LFLV), 294–314 (ALVF…VLAG), and 333–353 (MLAA…VPLA). The span at 376-410 (AHRQAAARQYAPRPAAAAAAAGPHQAGTYAASATP) shows a compositional bias: low complexity. Residues 376–463 (AHRQAAARQY…RVLPRKPNLP (88 aa)) are disordered. Pro residues predominate over residues 411 to 420 (APAPARPAPS). The span at 441 to 455 (VRRDDRPAPAPDRRV) shows a compositional bias: basic and acidic residues.

Its subcellular location is the cell membrane. The chain is Type IV secretion system protein PtlD homolog (ptlD) from Bordetella parapertussis (strain 12822 / ATCC BAA-587 / NCTC 13253).